A 170-amino-acid chain; its full sequence is MRKLIIEPLTKEAFAPFGDVIETDGSDHFMINNGSTMRFHRLAEVQTAQPDDKAIISIFRAEALPMPLTIGMLERHPQGSQAFIPLLGNPFLIVVAPVGDAPESELTRAFVSNGRQGVNYHRGVWHHPVLTIEKRDDFLVVDRSGEGNNCDEHYFAESQLLVLDPNPLEG.

It belongs to the ureidoglycolate lyase family. As to quaternary structure, homodimer. Requires Ni(2+) as cofactor.

The catalysed reaction is (S)-ureidoglycolate = urea + glyoxylate. The protein operates within nitrogen metabolism; (S)-allantoin degradation. In terms of biological role, catalyzes the catabolism of the allantoin degradation intermediate (S)-ureidoglycolate, generating urea and glyoxylate. Involved in the utilization of allantoin as nitrogen source. This Pseudomonas savastanoi pv. phaseolicola (strain 1448A / Race 6) (Pseudomonas syringae pv. phaseolicola (strain 1448A / Race 6)) protein is Ureidoglycolate lyase.